Reading from the N-terminus, the 678-residue chain is MASILLSLNTHTLLPLHTRTRTTKTTLKILRFSHKLPPSSPFYCNHETRLHLRCQTTTGTPSAADFAAAAGQDRLRKVPIKNIRNFCIIAHIDHGKSTLADKLLQMTGTVQKREMKEQFLDNMDLERERGITIKLQAARMRYVYENEGYCLNLIDTPGHVDFSYEVSRSLAACEGALLVVDASQGVEAQTLANVYLALENNLEIIPVLNKIDLPGAEPDRVCKEIEEVIGLDCSNAIHCSAKEGIGITEILNAIVERVPPPRDTAAMPLRALIFDSYYDPYRGVIVYFRVIDGNIKKGDRIYFMASEKDYYADEIGVLSPNQMQVEELYAGEVGYLSASIRSVADARVGDTITHYSRKAEQSLPGYEEATPMVFCGLFPVDADQFSELRDALEKLQLNDAALKFEPETSNAMGFGFRCGFLGLLHMEIVQERLEREYNLSLITTAPSVVYRVHCVDDDIVECSNPSLLPEPGKRRSVEEPFVKIELLTPKDYIGTLMELAQERRGEFKEMKYITENRASITYELPLAEMVGDFFDQLKSRSKGYASMEYTVVGYKESDLIRLDIQINGDPVEPLATIVHKDKAYSVGRALTQKLKELIPRQMFKVPIQACIGAKVIASESLSAIRKDVLAKCYGGDISRKKKLLKKQAAGKKRMKAIGKVDVPQEAFMAVLKLEKEVL.

A chloroplast-targeting transit peptide spans 1 to 43 (MASILLSLNTHTLLPLHTRTRTTKTTLKILRFSHKLPPSSPFY). The 182-residue stretch at 81–262 (KNIRNFCIIA…AIVERVPPPR (182 aa)) folds into the tr-type G domain. Residues 90 to 97 (AHIDHGKS), 155 to 159 (DTPGH), and 209 to 212 (NKID) contribute to the GTP site.

It belongs to the TRAFAC class translation factor GTPase superfamily. Classic translation factor GTPase family. LepA subfamily.

Its subcellular location is the plastid. It localises to the chloroplast. It carries out the reaction GTP + H2O = GDP + phosphate + H(+). Functionally, promotes chloroplast protein synthesis. May act as a fidelity factor of the translation reaction, by catalyzing a one-codon backward translocation of tRNAs on improperly translocated ribosomes. This Populus trichocarpa (Western balsam poplar) protein is Translation factor GUF1 homolog, chloroplastic.